We begin with the raw amino-acid sequence, 436 residues long: Tol-Pal system protein TolB (436 aa).

The first 28 residues, 1–28, serve as a signal peptide directing secretion; it reads MEMLRRNFFRLLMVLVAGCGLIASPANA.

The protein belongs to the TolB family. As to quaternary structure, the Tol-Pal system is composed of five core proteins: the inner membrane proteins TolA, TolQ and TolR, the periplasmic protein TolB and the outer membrane protein Pal. They form a network linking the inner and outer membranes and the peptidoglycan layer.

Its subcellular location is the periplasm. Part of the Tol-Pal system, which plays a role in outer membrane invagination during cell division and is important for maintaining outer membrane integrity. The protein is Tol-Pal system protein TolB of Rhizobium meliloti (strain 1021) (Ensifer meliloti).